The primary structure comprises 914 residues: Solute carrier family 12 member 9 (914 aa).

Residues 1 to 36 (MASENSPLLAYRLLGEEGAAFPPNGAGGSGVASARK) lie on the Cytoplasmic side of the membrane. Ser-6 bears the Phosphoserine mark. Residues 37–57 (LSTFLGVVVPTVLSMFSIVVF) form a helical membrane-spanning segment. Residues 58–72 (LRIGFVVGHAGLLQA) lie on the Extracellular side of the membrane. The chain crosses the membrane as a helical span at residues 73-93 (LAMLLVAYVILALTVLSVCAI). The Cytoplasmic segment spans residues 94–119 (ATNGAVRGGGAYFMISRTLGPEVGGS). A helical membrane pass occupies residues 120–140 (IGLMFYLANVCGCAVSLLGLV). Topologically, residues 141–167 (ESILDVFGADVTGSSGIKVLPQGYGWN) are extracellular. The chain crosses the membrane as a helical span at residues 168 to 188 (LLYGSLLLGLVGGVCALGAGL). Residues 189 to 193 (YARAS) are Cytoplasmic-facing. Residues 194–214 (FLTFLLVSGSLASVLVSFVAV) traverse the membrane as a helical segment. At 215–262 (GPRNITLAPRPGTNGSSVPPRHGHFTGFNGSTLKDNLGAGYAEDYTTG) the chain is on the extracellular side. N-linked (GlcNAc...) asparagine glycosylation is found at Asn-218, Asn-228, and Asn-243. The chain crosses the membrane as a helical span at residues 263–283 (AMMTFASVFAVLFNGCTGIMA). Over 284–297 (GANMSGELKDPSRA) the chain is Cytoplasmic. Residues 298 to 318 (IPLGTIIAVAYTFFIYILLFF) form a helical membrane-spanning segment. Over 319 to 338 (LSSFTCDRALLQGDYGFFRD) the chain is Extracellular. A helical transmembrane segment spans residues 339 to 359 (ISLWPPLVLIGIYATALSASM). Residues 360-376 (SSLIGASRILHALAQDD) are Cytoplasmic-facing. The helical transmembrane segment at 377-399 (LFGVILAPAKVVSGGGNPWGAVL) threads the bilayer. At 400–416 (YSWGLVQLVLLAGKLNT) the chain is on the extracellular side. Residues 417-437 (LAAVVTVFYLVAYAAVDLSCL) form a helical membrane-spanning segment. Residues 438 to 466 (SLEWASAPNFRPTFSLFSWHTCLLGVASC) lie on the Cytoplasmic side of the membrane. The chain crosses the membrane as a helical span at residues 467 to 487 (LLMMFLISPGAAGGSLLLMGL). Residues 488–740 (LSALLTARGG…LLRPRGGPGY (253 aa)) lie on the Extracellular side of the membrane. Positions 645–678 (PAFSEPAEGTREGGSPALSTLFPPPRAPGSPRAL) are disordered. A helical membrane pass occupies residues 741 to 761 (VDVCGLFLLQMATILSMVPAW). Topologically, residues 762-914 (HSARLRIFLC…GVTPVTCTDL (153 aa)) are cytoplasmic. A disordered region spans residues 843 to 864 (QQGRGTGGGPGGPEGRDGEEGP). Over residues 846–855 (RGTGGGPGGP) the composition is skewed to gly residues.

It belongs to the SLC12A transporter family. As to quaternary structure, interacts with SLC12A1.

The protein resides in the cell membrane. It localises to the lysosome membrane. Its function is as follows. May be an inhibitor of SLC12A1. Seems to correspond to a subunit of a multimeric transport system and thus, additional subunits may be required for its function. May play a role in lysosomal ion flux and osmoregulation. The polypeptide is Solute carrier family 12 member 9 (Slc12a9) (Rattus norvegicus (Rat)).